A 200-amino-acid chain; its full sequence is NADH-quinone oxidoreductase subunit C (200 aa).

It belongs to the complex I 30 kDa subunit family. As to quaternary structure, NDH-1 is composed of 14 different subunits. Subunits NuoB, C, D, E, F, and G constitute the peripheral sector of the complex.

The protein localises to the cell inner membrane. The catalysed reaction is a quinone + NADH + 5 H(+)(in) = a quinol + NAD(+) + 4 H(+)(out). In terms of biological role, NDH-1 shuttles electrons from NADH, via FMN and iron-sulfur (Fe-S) centers, to quinones in the respiratory chain. The immediate electron acceptor for the enzyme in this species is believed to be ubiquinone. Couples the redox reaction to proton translocation (for every two electrons transferred, four hydrogen ions are translocated across the cytoplasmic membrane), and thus conserves the redox energy in a proton gradient. The chain is NADH-quinone oxidoreductase subunit C from Burkholderia ambifaria (strain ATCC BAA-244 / DSM 16087 / CCUG 44356 / LMG 19182 / AMMD) (Burkholderia cepacia (strain AMMD)).